The primary structure comprises 91 residues: Small ribosomal subunit protein uS19 (91 aa).

Belongs to the universal ribosomal protein uS19 family.

Its function is as follows. Protein S19 forms a complex with S13 that binds strongly to the 16S ribosomal RNA. In Syntrophotalea carbinolica (strain DSM 2380 / NBRC 103641 / GraBd1) (Pelobacter carbinolicus), this protein is Small ribosomal subunit protein uS19.